The sequence spans 996 residues: KK-1 biosynthesis cluster protein D (996 aa).

4 disordered regions span residues 307-333 (HDTD…PELD), 425-449 (EQDN…ARDL), 489-556 (AGVA…ALRA), and 571-602 (STHS…SLHS). Composition is skewed to polar residues over residues 318–329 (PIRSNKLSQSKQ) and 428–439 (NQTNEEGTGEVQ). Composition is skewed to basic and acidic residues over residues 440–449 (SQRDRRARDL) and 500–527 (RAAE…DKAA). Polar residues predominate over residues 572 to 590 (THSIHQRASVNTTAPTVAR).

It functions in the pathway secondary metabolite biosynthesis. Functionally, part of the gene cluster that mediates the biosynthesis of KK-1, a novel cyclic depsipeptide with 10 residues which is a promising active compound with high activity against many plant pathogens, especially Botrytis cinerea. The role of kk1D in KK-1 biosynthesis has still to be determined. The nonribosomal peptide synthetase (NRPS) kk1B catalyzes the elongation and cyclization of the decapeptide chain composed of 1 D-lactic acid residue (D-Lac), 1 pipecolic acid residue (Pip), 1 aspartic acid residue (Asp), 1 isoleucine residue (Ile), 1 glycine residue (Gly), 1 tyrosine residue (Tyr) and 4 valine residues (Val). The Asp, Ile and 3 Val residues are N-methylated by the 5 methyltransferase domains from the NRPS (found in modules 3, 5, 6, 7 and 9), whereas the Tyr residue is O-methylated by the cluster encoded O-methyltransferase kk1A. The thioesterase kk1J is likely to be involved in the corrective mechanism of peptide chain synthesis. The D-lactate dehydrogenase kk1H is involved in the synthesis of D-lactic acid from pyruvic acid, which is recognized by the A domain of the first kk1B module. The pyrroline-5-carboxylate reductase kk1I is involved in the synthesis of the L-pipecolic acid residue of KK-1 from delta-1-pyrroline-5-carboxylate (P5C), a metabolic intermediate of lysine. It is still unclear how kk1C and kk1D are involved in the production of KK-1. This chain is KK-1 biosynthesis cluster protein D, found in Curvularia clavata.